The sequence spans 493 residues: Amino acid permease 2 (493 aa).

The Cytoplasmic portion of the chain corresponds to 1-49 (MGETAAANNHRHHHHHGHQVFDVASHDFVPPQPAFKCFDDDGRLKRTGT). 2 helical membrane passes run 50–70 (VWTASAHIITAVIGSGVLSLA) and 71–91 (WAIAQLGWIAGPAVMLLFSLV). At 92–138 (TLYSSTLLSDCYRTGDAVSGKRNYTYMDAVRSILGGFKFKICGLIQY) the chain is on the cytoplasmic side. Residues 139 to 159 (LNLFGIAIGYTIAASISMMAI) traverse the membrane as a helical segment. Residues 160–175 (KRSNCFHKSGGKDPCH) are Extracellular-facing. The helical transmembrane segment at 176 to 196 (MSSNPYMIVFGVAEILLSQVP) threads the bilayer. The Cytoplasmic portion of the chain corresponds to 197–200 (DFDQ). A helical transmembrane segment spans residues 201 to 221 (IWWISIVAAVMSFTYSAIGLA). The Extracellular segment spans residues 222–253 (LGIVQVAANGVFKGSLTGISIGTVTQTQKIWR). Residues 254–274 (TFQALGDIAFAYSYSVVLIEI) traverse the membrane as a helical segment. Residues 275–293 (QDTVRSPPAESKTMKKATK) are Cytoplasmic-facing. Residues 294-314 (ISIAVTTIFYMLCGSMGYAAF) form a helical membrane-spanning segment. Over 315–340 (GDAAPGNLLTGFGFYNPFWLLDIANA) the chain is Extracellular. The chain crosses the membrane as a helical span at residues 341-361 (AIVVHLVGAYQVFAQPIFAFI). At 362–396 (EKSVAERYPDNDFLSKEFEIRIPGFKSPYKVNVFR) the chain is on the cytoplasmic side. The helical transmembrane segment at 397–417 (MVYRSGFVVTTTVISMLMPFF) threads the bilayer. At 418–419 (ND) the chain is on the extracellular side. Residues 420–440 (VVGILGALGFWPLTVYFPVEM) traverse the membrane as a helical segment. Residues 441 to 458 (YIKQRKVEKWSTRWVCLQ) are Cytoplasmic-facing. The helical transmembrane segment at 459–479 (MLSVACLVISVVAGVGSIAGV) threads the bilayer. Residues 480–493 (MLDLKVYKPFKSTY) lie on the Extracellular side of the membrane.

It belongs to the amino acid/polyamine transporter 2 family. Amino acid/auxin permease (AAAP) (TC 2.A.18.2) subfamily. In terms of tissue distribution, highly expressed in developing pods. Found in the vascular strands of siliques, cotyledons, leaves and roots, in the inner phloem of stems, and in the funiculi. Lower levels of expression in flowers. Not expressed in seeds.

The protein localises to the cell membrane. Its activity is regulated as follows. Inhibited by diethylpyrocarbonate (DEPC). Amino acid-proton symporter. Stereospecific transporter with a broad specificity for histidine, arginine, glutamate and neutral amino acids, favoring small amino acids such as alanine, asparagine and glutamine. Also accepts large aromatic residues such as phenlalanine or tyrosine. Has a much higher affinity for basic amino acids as compared with AAP1. May function in xylem-to-phloem transfer and in uptake of amino acids assimilated in the green silique tissue. This chain is Amino acid permease 2 (AAP2), found in Arabidopsis thaliana (Mouse-ear cress).